We begin with the raw amino-acid sequence, 193 residues long: Superoxide dismutase [Fe] (193 aa).

4 residues coordinate Fe cation: H27, H74, D157, and H161.

This sequence belongs to the iron/manganese superoxide dismutase family. As to quaternary structure, monomer. Fe cation serves as cofactor.

It carries out the reaction 2 superoxide + 2 H(+) = H2O2 + O2. Functionally, destroys superoxide anion radicals which are normally produced within the cells and which are toxic to biological systems. Involved in the metabolism of 4-aminophenol. May have an indirect role in hydroxyquinol metabolism by scavenging and detoxifying reactive species that promote its auto-oxidation. The polypeptide is Superoxide dismutase [Fe] (Burkholderia sp).